We begin with the raw amino-acid sequence, 212 residues long: Thymidylate kinase (212 aa).

10-17 lines the ATP pocket; that stretch reads GPDGAGKT.

Belongs to the thymidylate kinase family.

The catalysed reaction is dTMP + ATP = dTDP + ADP. Phosphorylation of dTMP to form dTDP in both de novo and salvage pathways of dTTP synthesis. This Enterococcus faecalis (strain ATCC 700802 / V583) protein is Thymidylate kinase.